Consider the following 419-residue polypeptide: Multifunctional CCA protein (419 aa).

Positions 8 and 11 each coordinate ATP. CTP is bound by residues Gly-8 and Arg-11. Residues Asp-21 and Asp-23 each contribute to the Mg(2+) site. ATP is bound by residues Arg-91, Arg-137, and Arg-140. Arg-91, Arg-137, and Arg-140 together coordinate CTP. The HD domain occupies 228–334; sequence SFLHTMLVLQ…IKLFNKLDVW (107 aa).

The protein belongs to the tRNA nucleotidyltransferase/poly(A) polymerase family. Bacterial CCA-adding enzyme type 1 subfamily. As to quaternary structure, monomer. Can also form homodimers and oligomers. Mg(2+) serves as cofactor. It depends on Ni(2+) as a cofactor.

The catalysed reaction is a tRNA precursor + 2 CTP + ATP = a tRNA with a 3' CCA end + 3 diphosphate. It catalyses the reaction a tRNA with a 3' CCA end + 2 CTP + ATP = a tRNA with a 3' CCACCA end + 3 diphosphate. In terms of biological role, catalyzes the addition and repair of the essential 3'-terminal CCA sequence in tRNAs without using a nucleic acid template. Adds these three nucleotides in the order of C, C, and A to the tRNA nucleotide-73, using CTP and ATP as substrates and producing inorganic pyrophosphate. tRNA 3'-terminal CCA addition is required both for tRNA processing and repair. Also involved in tRNA surveillance by mediating tandem CCA addition to generate a CCACCA at the 3' terminus of unstable tRNAs. While stable tRNAs receive only 3'-terminal CCA, unstable tRNAs are marked with CCACCA and rapidly degraded. This chain is Multifunctional CCA protein, found in Mannheimia succiniciproducens (strain KCTC 0769BP / MBEL55E).